Here is a 317-residue protein sequence, read N- to C-terminus: tRNA(Met) cytidine acetate ligase (317 aa).

ATP-binding positions include 6–19 (IAEY…HIYQ), G100, N157, and R182.

This sequence belongs to the TmcAL family.

The protein resides in the cytoplasm. The enzyme catalyses cytidine(34) in elongator tRNA(Met) + acetate + ATP = N(4)-acetylcytidine(34) in elongator tRNA(Met) + AMP + diphosphate. In terms of biological role, catalyzes the formation of N(4)-acetylcytidine (ac(4)C) at the wobble position of elongator tRNA(Met), using acetate and ATP as substrates. First activates an acetate ion to form acetyladenylate (Ac-AMP) and then transfers the acetyl group to tRNA to form ac(4)C34. This is tRNA(Met) cytidine acetate ligase from Mesomycoplasma hyopneumoniae (strain 232) (Mycoplasma hyopneumoniae).